A 415-amino-acid chain; its full sequence is Acetate kinase (415 aa).

A Mg(2+)-binding site is contributed by Asn8. Residue Lys15 coordinates ATP. Arg106 is a binding site for substrate. The Proton donor/acceptor role is filled by Asp163. Residues 222 to 226 (HLGNG), 296 to 298 (DLR), and 344 to 348 (GIGEN) each bind ATP. Glu397 contacts Mg(2+).

The protein belongs to the acetokinase family. Homodimer. Mg(2+) is required as a cofactor. Requires Mn(2+) as cofactor.

It is found in the cytoplasm. The catalysed reaction is acetate + ATP = acetyl phosphate + ADP. It participates in metabolic intermediate biosynthesis; acetyl-CoA biosynthesis; acetyl-CoA from acetate: step 1/2. In terms of biological role, catalyzes the formation of acetyl phosphate from acetate and ATP. Can also catalyze the reverse reaction. In Thermosynechococcus vestitus (strain NIES-2133 / IAM M-273 / BP-1), this protein is Acetate kinase.